Reading from the N-terminus, the 59-residue chain is Small, acid-soluble spore protein H 2 (59 aa).

It belongs to the SspH family.

Its subcellular location is the spore core. The polypeptide is Small, acid-soluble spore protein H 2 (sspH2) (Bacillus cereus (strain ATCC 14579 / DSM 31 / CCUG 7414 / JCM 2152 / NBRC 15305 / NCIMB 9373 / NCTC 2599 / NRRL B-3711)).